Reading from the N-terminus, the 111-residue chain is Fluoride-specific ion channel FluC 3 (111 aa).

The next 3 helical transmembrane spans lie at 26 to 46, 53 to 73, and 91 to 111; these read IPAG…LLTF, VVYL…TFAY, and IFLN…ALML. Na(+)-binding residues include G63 and T66.

This sequence belongs to the fluoride channel Fluc/FEX (TC 1.A.43) family.

The protein localises to the cell membrane. It carries out the reaction fluoride(in) = fluoride(out). Na(+) is not transported, but it plays an essential structural role and its presence is essential for fluoride channel function. In terms of biological role, fluoride-specific ion channel. Important for reducing fluoride concentration in the cell, thus reducing its toxicity. This chain is Fluoride-specific ion channel FluC 3, found in Methanosarcina acetivorans (strain ATCC 35395 / DSM 2834 / JCM 12185 / C2A).